The primary structure comprises 329 residues: Deoxynucleotidyltransferase terminal-interacting protein 1 (329 aa).

Disordered stretches follow at residues 1-22 and 147-178; these read MGAT…GGLE and KRGR…ILSS. The important for dimerization stretch occupies residues 56–147; the sequence is MTTSFTDPAI…RLTHELPGIK (92 aa). Basic and acidic residues predominate over residues 147 to 158; the sequence is KRGRQAEEECAH. The segment at residues 159 to 173 is a DNA-binding region (a.T hook); it reads RGSPLPKKRKGRPPG. A Phosphoserine modification is found at serine 161. The short motif at 164-170 is the Nuclear localization signal element; that stretch reads PKKRKGR. The segment at 197–316 is important for DNA and nucleosome binding; the sequence is REGPKWDPAR…MRKYMETLRT (120 aa). Residues 216-237 constitute a DNA-binding region (H-T-H motif); that stretch reads GSRANKALGMGGTRGRIYIKHP.

In terms of assembly, monomer and homodimer. A minor proportion may form homotrimers. Interacts with ZNF541. Interacts with the terminal deoxynucleotidyltransferase DNTT. Interacts with TRERF1. Identified in a histone deacetylase complex that contains DNTTIP1, HDAC1 and MIDEAS; this complex assembles into a tetramer that contains four copies of each protein chain. Component of a histone deacetylase complex containing DNTTIP1, ZNF541, HDAC1 and HDAC2. Identified in a complex with KCTD19, HDAC1, HDAC2 and ZNF541.

Its subcellular location is the nucleus. Increases DNTT terminal deoxynucleotidyltransferase activity (in vitro). Also acts as a transcriptional regulator, binding to the consensus sequence 5'-GNTGCATG-3' following an AT-tract. Associates with RAB20 promoter and positively regulates its transcription. Binds DNA and nucleosomes; may recruit HDAC1 complexes to nucleosomes or naked DNA. This chain is Deoxynucleotidyltransferase terminal-interacting protein 1 (DNTTIP1), found in Pongo abelii (Sumatran orangutan).